The primary structure comprises 260 residues: Snake venom serine protease KN5 (260 aa).

A signal peptide spans 1 to 18 (MVLIRVLANLLILQLSYA). A propeptide spanning residues 19–24 (QKSSEL) is cleaved from the precursor. Residues 25–251 (VIGGDECNIN…HLDWIQSIIA (227 aa)) form the Peptidase S1 domain. 5 disulfide bridges follow: cysteine 31–cysteine 165, cysteine 100–cysteine 258, cysteine 144–cysteine 212, cysteine 176–cysteine 191, and cysteine 202–cysteine 227. The active-site Charge relay system is the histidine 67. Asparagine 105 carries an N-linked (GlcNAc...) asparagine glycan. Aspartate 112 serves as the catalytic Charge relay system. N-linked (GlcNAc...) asparagine glycosylation is found at asparagine 124 and asparagine 172. Catalysis depends on serine 206, which acts as the Charge relay system. N-linked (GlcNAc...) asparagine glycans are attached at residues asparagine 213 and asparagine 255.

This sequence belongs to the peptidase S1 family. Snake venom subfamily. As to quaternary structure, monomer. As to expression, expressed by the venom gland.

It is found in the secreted. In terms of biological role, snake venom serine protease that may act in the hemostasis system of the prey. The chain is Snake venom serine protease KN5 from Trimeresurus stejnegeri (Chinese green tree viper).